The sequence spans 161 residues: UPF0262 protein Rru_A2770 (161 aa).

This sequence belongs to the UPF0262 family.

The polypeptide is UPF0262 protein Rru_A2770 (Rhodospirillum rubrum (strain ATCC 11170 / ATH 1.1.1 / DSM 467 / LMG 4362 / NCIMB 8255 / S1)).